The following is a 616-amino-acid chain: Dihydroxy-acid dehydratase (616 aa).

A Mg(2+)-binding site is contributed by Asp-81. Cys-122 contacts [2Fe-2S] cluster. Residues Asp-123 and Lys-124 each contribute to the Mg(2+) site. Lys-124 bears the N6-carboxylysine mark. Cys-195 contributes to the [2Fe-2S] cluster binding site. Mg(2+) is bound at residue Glu-491. Ser-517 functions as the Proton acceptor in the catalytic mechanism.

This sequence belongs to the IlvD/Edd family. As to quaternary structure, homodimer. Requires [2Fe-2S] cluster as cofactor. Mg(2+) serves as cofactor.

The enzyme catalyses (2R)-2,3-dihydroxy-3-methylbutanoate = 3-methyl-2-oxobutanoate + H2O. It carries out the reaction (2R,3R)-2,3-dihydroxy-3-methylpentanoate = (S)-3-methyl-2-oxopentanoate + H2O. It participates in amino-acid biosynthesis; L-isoleucine biosynthesis; L-isoleucine from 2-oxobutanoate: step 3/4. It functions in the pathway amino-acid biosynthesis; L-valine biosynthesis; L-valine from pyruvate: step 3/4. In terms of biological role, functions in the biosynthesis of branched-chain amino acids. Catalyzes the dehydration of (2R,3R)-2,3-dihydroxy-3-methylpentanoate (2,3-dihydroxy-3-methylvalerate) into 2-oxo-3-methylpentanoate (2-oxo-3-methylvalerate) and of (2R)-2,3-dihydroxy-3-methylbutanoate (2,3-dihydroxyisovalerate) into 2-oxo-3-methylbutanoate (2-oxoisovalerate), the penultimate precursor to L-isoleucine and L-valine, respectively. The polypeptide is Dihydroxy-acid dehydratase (Escherichia coli O8 (strain IAI1)).